A 151-amino-acid polypeptide reads, in one-letter code: UPF0756 membrane protein Dred_1676 (151 aa).

4 helical membrane-spanning segments follow: residues 9–29, 47–67, 75–95, and 111–131; these read VILL…CASV, THGL…PIAT, LLYN…ILAT, and IIFG…GQPV.

It belongs to the UPF0756 family.

The protein resides in the cell membrane. The chain is UPF0756 membrane protein Dred_1676 from Desulforamulus reducens (strain ATCC BAA-1160 / DSM 100696 / MI-1) (Desulfotomaculum reducens).